The following is a 101-amino-acid chain: Small ribosomal subunit protein uS14 (101 aa).

This sequence belongs to the universal ribosomal protein uS14 family. Part of the 30S ribosomal subunit. Contacts proteins S3 and S10.

Binds 16S rRNA, required for the assembly of 30S particles and may also be responsible for determining the conformation of the 16S rRNA at the A site. This chain is Small ribosomal subunit protein uS14, found in Ruthia magnifica subsp. Calyptogena magnifica.